A 214-amino-acid chain; its full sequence is Large ribosomal subunit protein uL3 (214 aa).

Residues 133-153 (GRATHGNSRSHNVPGSIGMAQ) form a disordered region. At Q153 the chain carries N5-methylglutamine.

Belongs to the universal ribosomal protein uL3 family. As to quaternary structure, part of the 50S ribosomal subunit. Forms a cluster with proteins L14 and L19. Methylated by PrmB.

In terms of biological role, one of the primary rRNA binding proteins, it binds directly near the 3'-end of the 23S rRNA, where it nucleates assembly of the 50S subunit. The sequence is that of Large ribosomal subunit protein uL3 from Cupriavidus metallidurans (strain ATCC 43123 / DSM 2839 / NBRC 102507 / CH34) (Ralstonia metallidurans).